A 241-amino-acid chain; its full sequence is Zinc finger CCHC domain-containing protein 24 (241 aa).

Phosphoserine occurs at positions 65 and 93. The CCHC-type zinc-finger motif lies at 132–149 (YLCHLCFNKGHYIKDCPQ).

The sequence is that of Zinc finger CCHC domain-containing protein 24 (ZCCHC24) from Macaca fascicularis (Crab-eating macaque).